The chain runs to 200 residues: MGDEEKRKMEEKERKKAEVRKRLEEAAKAKKAGGKRGFMTPERKKKLRNLLRKKAAEELKKEQERKAEQRRKIIAERIGQPKPLDNCNEATLVGILKQYHARIAQLEDAKYDLEYEVRQKDFVINELTIQVNDLRGKFVKPALKKVSKFDKLKMVVKSTSEVDFRSSLKSVKKDAFKLDEENKADKKPEWALGSKKENEE.

Disordered regions lie at residues 1–20 and 181–200; these read MGDE…AEVR and ENKA…ENEE. Residues 2–116 are a coiled coil; it reads GDEEKRKMEE…EDAKYDLEYE (115 aa).

The protein belongs to the troponin I family. Expressed in salivary gland, gut, muscle and cuticle (at protein level).

In terms of biological role, inhibits endothelial cell proliferation and angiogenesis in a vertebrate host. Probably required for efficient blood feeding on vertebrate hosts. In Haemaphysalis longicornis (Bush tick), this protein is Troponin I-like protein.